A 134-amino-acid polypeptide reads, in one-letter code: Large ribosomal subunit protein eL28 (134 aa).

Residue S60 is modified to Phosphoserine.

This sequence belongs to the eukaryotic ribosomal protein eL28 family. Component of the large ribosomal subunit (LSU). Mature yeast ribosomes consist of a small (40S) and a large (60S) subunit. The 40S small subunit contains 1 molecule of ribosomal RNA (18S rRNA) and at least 33 different proteins. The large 60S subunit contains 3 rRNA molecules (25S, 5.8S and 5S rRNA) and at least 46 different proteins.

Its subcellular location is the cytoplasm. Functionally, component of the ribosome, a large ribonucleoprotein complex responsible for the synthesis of proteins in the cell. The small ribosomal subunit (SSU) binds messenger RNAs (mRNAs) and translates the encoded message by selecting cognate aminoacyl-transfer RNA (tRNA) molecules. The large subunit (LSU) contains the ribosomal catalytic site termed the peptidyl transferase center (PTC), which catalyzes the formation of peptide bonds, thereby polymerizing the amino acids delivered by tRNAs into a polypeptide chain. The nascent polypeptides leave the ribosome through a tunnel in the LSU and interact with protein factors that function in enzymatic processing, targeting, and the membrane insertion of nascent chains at the exit of the ribosomal tunnel. In Schizosaccharomyces pombe (strain 972 / ATCC 24843) (Fission yeast), this protein is Large ribosomal subunit protein eL28 (rpl44).